The following is a 128-amino-acid chain: MSKPKRERVLPDNEAKAVARMLRVSPQKLNLVAQLIRGRKAAAALADLQFSRKRIAVDVKKCLESAIANAENNHDLDVDALVVSEAHVGKGIVMKRFSPRGRGRSGRILKPFAQLTIVVRQVEAEASA.

This sequence belongs to the universal ribosomal protein uL22 family. As to quaternary structure, part of the 50S ribosomal subunit.

This protein binds specifically to 23S rRNA; its binding is stimulated by other ribosomal proteins, e.g. L4, L17, and L20. It is important during the early stages of 50S assembly. It makes multiple contacts with different domains of the 23S rRNA in the assembled 50S subunit and ribosome. Functionally, the globular domain of the protein is located near the polypeptide exit tunnel on the outside of the subunit, while an extended beta-hairpin is found that lines the wall of the exit tunnel in the center of the 70S ribosome. In Rhodopseudomonas palustris (strain HaA2), this protein is Large ribosomal subunit protein uL22.